The sequence spans 159 residues: uncharacterized protein (159 aa).

One can recognise an HTH asnC-type domain in the interval 6 to 66 (LSKKDWEIIK…YLRFDKLGYT (61 aa)). Residues 25 to 44 (DAEIGRRIGLSKSAVRWRRI) constitute a DNA-binding region (H-T-H motif).

This is an uncharacterized protein from Pyrococcus horikoshii (strain ATCC 700860 / DSM 12428 / JCM 9974 / NBRC 100139 / OT-3).